Reading from the N-terminus, the 816-residue chain is Phosphatidylinositol 4-kinase beta (816 aa).

Residues 1–30 are disordered; the sequence is MGDTVVEPAPLKPTSEPTSGPPGNNGGSLL. At Gly2 the chain carries N-acetylglycine. Residues 29–242 form the PIK helical domain; sequence LLSVITEGVG…GTKLRKLILS (214 aa). Residues 41–67 are interaction with ACBD3; that stretch reads SVIDPEVAQKACQEVLEKVKLLHGGVA. 2 disordered regions span residues 101-120 and 248-318; these read EDEM…RRRR and AHRK…SFSS. Position 258 is a phosphoserine (Ser258). Thr263 is subject to Phosphothreonine. 5 positions are modified to phosphoserine: Ser266, Ser275, Ser277, Ser284, and Ser294. 2 stretches are compositionally biased toward polar residues: residues 278–297 and 306–318; these read DATA…SNPK and SSST…SFSS. A Phosphoserine modification is found at Ser428. Thr438 is modified (phosphothreonine). Ser511 bears the Phosphoserine mark. Phosphothreonine is present on residues Thr517 and Thr519. In terms of domain architecture, PI3K/PI4K catalytic spans 535 to 801; sequence EPWQEKVRRI…MVDGSMRSIT (267 aa). The G-loop stretch occupies residues 541 to 547; that stretch reads VRRIREG. The tract at residues 668-676 is catalytic loop; sequence QVKDRHNGN. The tract at residues 687–711 is activation loop; the sequence is HIDFGFILSSSPRNLGFETSAFKLT.

Belongs to the PI3/PI4-kinase family. Type III PI4K subfamily. Interacts with ARF1 and ARF3 in the Golgi complex, but not with ARF4, ARF5 or ARF6. Interacts with NCS1/FREQ in a calcium-independent manner. Interacts with CALN1/CABP8 and CALN2/CABP7; in a calcium-dependent manner; this interaction competes with NCS1/FREQ binding. Interacts with ACBD3. Interacts with ARMH3, YWHAB, YWHAE, YWHAG, YWHAH, YWHAQ, YWHAZ and SFN. Interacts with GGA2 (via VHS domain); the interaction is important for PI4KB location at the Golgi apparatus membrane. Interacts with ATG9A. As to quaternary structure, (Microbial infection) Interacts with Aichi virus protein 3A. Part of a complex Aichi virus protein 3A/ACBD3/PI4KB that allows the synthesis of PI4P at the viral RNA replication sites. It depends on Mg(2+) as a cofactor. Mn(2+) is required as a cofactor. In terms of tissue distribution, widely expressed with highest levels in heart, skeletal muscle, pancreas, testis and ovary. Weakly expressed in liver. Expressed in the innear ear in the epithelium of the spinal organ of corti.

Its subcellular location is the endomembrane system. The protein localises to the mitochondrion outer membrane. It is found in the rough endoplasmic reticulum membrane. The protein resides in the golgi apparatus. It localises to the golgi apparatus membrane. Its subcellular location is the cytoplasm. The protein localises to the perinuclear region. The catalysed reaction is a 1,2-diacyl-sn-glycero-3-phospho-(1D-myo-inositol) + ATP = a 1,2-diacyl-sn-glycero-3-phospho-(1D-myo-inositol 4-phosphate) + ADP + H(+). Its activity is regulated as follows. Inhibited by wortmannin and adenosine. Increased kinase activity upon interaction with NCS1/FREQ. With respect to regulation, (Microbial infection) Activated by Aichi virus protein 3A, this activation is sensitized by ACBD3. In terms of biological role, phosphorylates phosphatidylinositol (PI) in the first committed step in the production of the second messenger inositol-1,4,5,-trisphosphate (PIP). May regulate Golgi disintegration/reorganization during mitosis, possibly via its phosphorylation. Involved in Golgi-to-plasma membrane trafficking. May play an important role in the inner ear development. Its function is as follows. (Microbial infection) Plays an essential role in Aichi virus RNA replication. Recruited by ACBD3 at the viral replication sites. Functionally, (Microbial infection) Required for cellular spike-mediated entry of human coronavirus SARS-CoV. This Homo sapiens (Human) protein is Phosphatidylinositol 4-kinase beta.